Here is a 180-residue protein sequence, read N- to C-terminus: CASP-like protein 2D1 (180 aa).

At 1-7 (MAASGLK) the chain is on the cytoplasmic side. Residues 8–28 (VPEMALRVCVVPLALASLWEM) traverse the membrane as a helical segment. The Extracellular portion of the chain corresponds to 29-48 (ATNAQADDTYGEVKFSDLSG). A helical transmembrane segment spans residues 49-69 (FSYLVGVNAVTAAYALVSILL). Topologically, residues 70 to 79 (SSLKPLARYD) are cytoplasmic. A helical membrane pass occupies residues 80-100 (WVILVMDQASAYLLVTSASAA). The Extracellular segment spans residues 101–129 (AELLQLARRGDREVSWGEVCSYFGRFCGK). Residues 130-150 (ATVSLALHAAALACFVALALV) traverse the membrane as a helical segment. At 151 to 180 (SAFRVLSTTGSSCHPPKHAQAQEHEQGRYN) the chain is on the cytoplasmic side. The segment at 161–180 (SSCHPPKHAQAQEHEQGRYN) is disordered. The segment covering 170-180 (QAQEHEQGRYN) has biased composition (basic and acidic residues).

This sequence belongs to the Casparian strip membrane proteins (CASP) family. As to quaternary structure, homodimer and heterodimers.

Its subcellular location is the cell membrane. The sequence is that of CASP-like protein 2D1 from Sorghum bicolor (Sorghum).